The primary structure comprises 235 residues: 7-cyano-7-deazaguanine synthase (235 aa).

Residue Phe-12 to Leu-22 participates in ATP binding. 4 residues coordinate Zn(2+): Cys-200, Cys-215, Cys-218, and Cys-221.

The protein belongs to the QueC family. Zn(2+) is required as a cofactor.

The catalysed reaction is 7-carboxy-7-deazaguanine + NH4(+) + ATP = 7-cyano-7-deazaguanine + ADP + phosphate + H2O + H(+). The protein operates within purine metabolism; 7-cyano-7-deazaguanine biosynthesis. Its function is as follows. Catalyzes the ATP-dependent conversion of 7-carboxy-7-deazaguanine (CDG) to 7-cyano-7-deazaguanine (preQ(0)). In Methylibium petroleiphilum (strain ATCC BAA-1232 / LMG 22953 / PM1), this protein is 7-cyano-7-deazaguanine synthase.